The following is a 440-amino-acid chain: L-gulonolactone oxidase (440 aa).

Residues 17-187 (YSCEPELYFE…LNVTIQCVPA (171 aa)) form the FAD-binding PCMH-type domain. Residue His54 is modified to Pros-8alpha-FAD histidine. Residues 245–267 (WFWNYAIGYYLLEFLLWISVFVP) form a helical membrane-spanning segment.

Belongs to the oxygen-dependent FAD-linked oxidoreductase family. It depends on FAD as a cofactor.

The protein localises to the microsome membrane. Its subcellular location is the endoplasmic reticulum membrane. The catalysed reaction is L-gulono-1,4-lactone + O2 = L-ascorbate + H2O2 + H(+). The protein operates within cofactor biosynthesis; L-ascorbate biosynthesis via UDP-alpha-D-glucuronate pathway; L-ascorbate from UDP-alpha-D-glucuronate: step 4/4. Oxidizes L-gulono-1,4-lactone to hydrogen peroxide and L-xylo-hexulonolactone which spontaneously isomerizes to L-ascorbate. In Scyliorhinus torazame (Cloudy catshark), this protein is L-gulonolactone oxidase (GULO).